A 284-amino-acid chain; its full sequence is 4-hydroxy-3-methylbut-2-enyl diphosphate reductase (284 aa).

Cys12 serves as a coordination point for [4Fe-4S] cluster. Positions 40 and 76 each coordinate (2E)-4-hydroxy-3-methylbut-2-enyl diphosphate. 2 residues coordinate dimethylallyl diphosphate: His40 and His76. Residues His40 and His76 each coordinate isopentenyl diphosphate. Residue Cys98 participates in [4Fe-4S] cluster binding. His126 contributes to the (2E)-4-hydroxy-3-methylbut-2-enyl diphosphate binding site. His126 is a binding site for dimethylallyl diphosphate. Position 126 (His126) interacts with isopentenyl diphosphate. Glu128 (proton donor) is an active-site residue. Thr161 serves as a coordination point for (2E)-4-hydroxy-3-methylbut-2-enyl diphosphate. Residue Cys191 participates in [4Fe-4S] cluster binding. (2E)-4-hydroxy-3-methylbut-2-enyl diphosphate-binding residues include Ser219, Ser220, Asn221, and Ser263. Residues Ser219, Ser220, Asn221, and Ser263 each contribute to the dimethylallyl diphosphate site. Positions 219, 220, 221, and 263 each coordinate isopentenyl diphosphate.

Belongs to the IspH family. The cofactor is [4Fe-4S] cluster.

It catalyses the reaction isopentenyl diphosphate + 2 oxidized [2Fe-2S]-[ferredoxin] + H2O = (2E)-4-hydroxy-3-methylbut-2-enyl diphosphate + 2 reduced [2Fe-2S]-[ferredoxin] + 2 H(+). It carries out the reaction dimethylallyl diphosphate + 2 oxidized [2Fe-2S]-[ferredoxin] + H2O = (2E)-4-hydroxy-3-methylbut-2-enyl diphosphate + 2 reduced [2Fe-2S]-[ferredoxin] + 2 H(+). The protein operates within isoprenoid biosynthesis; dimethylallyl diphosphate biosynthesis; dimethylallyl diphosphate from (2E)-4-hydroxy-3-methylbutenyl diphosphate: step 1/1. It participates in isoprenoid biosynthesis; isopentenyl diphosphate biosynthesis via DXP pathway; isopentenyl diphosphate from 1-deoxy-D-xylulose 5-phosphate: step 6/6. In terms of biological role, catalyzes the conversion of 1-hydroxy-2-methyl-2-(E)-butenyl 4-diphosphate (HMBPP) into a mixture of isopentenyl diphosphate (IPP) and dimethylallyl diphosphate (DMAPP). Acts in the terminal step of the DOXP/MEP pathway for isoprenoid precursor biosynthesis. In Petrotoga mobilis (strain DSM 10674 / SJ95), this protein is 4-hydroxy-3-methylbut-2-enyl diphosphate reductase.